A 453-amino-acid polypeptide reads, in one-letter code: Trigger factor (453 aa).

The region spanning 171 to 256 (GDRVTVSFKG…ATLVEAPKDT (86 aa)) is the PPIase FKBP-type domain.

The protein belongs to the FKBP-type PPIase family. Tig subfamily.

It is found in the cytoplasm. It catalyses the reaction [protein]-peptidylproline (omega=180) = [protein]-peptidylproline (omega=0). Involved in protein export. Acts as a chaperone by maintaining the newly synthesized protein in an open conformation. Functions as a peptidyl-prolyl cis-trans isomerase. The sequence is that of Trigger factor from Rhodopseudomonas palustris (strain BisA53).